Here is a 209-residue protein sequence, read N- to C-terminus: Large ribosomal subunit protein uL3 (209 aa).

An N5-methylglutamine modification is found at Gln150.

The protein belongs to the universal ribosomal protein uL3 family. As to quaternary structure, part of the 50S ribosomal subunit. Forms a cluster with proteins L14 and L19. Methylated by PrmB.

In terms of biological role, one of the primary rRNA binding proteins, it binds directly near the 3'-end of the 23S rRNA, where it nucleates assembly of the 50S subunit. The polypeptide is Large ribosomal subunit protein uL3 (Buchnera aphidicola subsp. Schizaphis graminum (strain Sg)).